A 477-amino-acid chain; its full sequence is V-type ATP synthase beta chain (477 aa).

This sequence belongs to the ATPase alpha/beta chains family.

In terms of biological role, produces ATP from ADP in the presence of a proton gradient across the membrane. The V-type beta chain is a regulatory subunit. This is V-type ATP synthase beta chain from Anaeromyxobacter sp. (strain K).